A 460-amino-acid polypeptide reads, in one-letter code: Probable glucan endo-1,3-beta-glucosidase eglC (460 aa).

A signal peptide spans 1 to 18 (MQLAQLAAFAMTLATSEA). The Proton donor role is filled by Glu128. Residue Asn183 is glycosylated (N-linked (GlcNAc...) asparagine). Glu239 serves as the catalytic Nucleophile. Asn312, Asn367, and Asn373 each carry an N-linked (GlcNAc...) asparagine glycan. Residues 379 to 437 (RPSGSASARPSAGAISSGSGSSSSGSGSSGSTGTSATSGQSSSSGSSAAAGSSSPAAFS) form a disordered region. Residues 380–437 (PSGSASARPSAGAISSGSGSSSSGSGSSGSTGTSATSGQSSSSGSSAAAGSSSPAAFS) show a composition bias toward low complexity. Ser430 carries the GPI-anchor amidated serine lipid modification. A propeptide spans 431-460 (SSPAAFSGASTLSGSLFGAVVAVFMTLAAL) (removed in mature form).

Belongs to the glycosyl hydrolase 17 family. In terms of processing, the GPI-anchor is attached to the protein in the endoplasmic reticulum and serves to target the protein to the cell surface. There, the glucosamine-inositol phospholipid moiety is cleaved off and the GPI-modified mannoprotein is covalently attached via its lipidless GPI glycan remnant to the 1,6-beta-glucan of the outer cell wall layer.

Its subcellular location is the cell membrane. It localises to the secreted. It is found in the cell wall. The enzyme catalyses Hydrolysis of (1-&gt;3)-beta-D-glucosidic linkages in (1-&gt;3)-beta-D-glucans.. Its function is as follows. Glucanases play a role in cell expansion during growth, in cell-cell fusion during mating, and in spore release during sporulation. This enzyme may be involved in beta-glucan degradation and also function biosynthetically as a transglycosylase. In Aspergillus niger (strain ATCC MYA-4892 / CBS 513.88 / FGSC A1513), this protein is Probable glucan endo-1,3-beta-glucosidase eglC (eglC).